The sequence spans 491 residues: Cytochrome P450 81F2 (491 aa).

Residues valine 283–threonine 303 traverse the membrane as a helical segment. Cysteine 429 serves as a coordination point for heme.

Belongs to the cytochrome P450 family. It depends on heme as a cofactor.

Its subcellular location is the membrane. It participates in secondary metabolite biosynthesis. Functionally, involved in indole glucosinolate biosynthesis. Catalyzes hydroxylation reactions of the glucosinolate indole ring. Converts indol-3-yl-methylglucosinolate (I3M) to 4-hydroxy-indol-3-yl-methylglucosinolate (4OH-I3M) and/or 1-hydroxy-indol-3-yl-methylglucosinolate (1OH-I3M) intermediates. These hydroxy intermediates are converted to 4-methoxy-indol-3-yl-methylglucosinolate (4MO-I3M) and 1-methoxy-indol-3-yl-methylglucosinolate (1MO-I3M) by indole glucosinolate methyltransferase 1 and 2 (IGMT1 and IGMT2). Contributes to defense against the green peach aphid (Myzus persicae), a generalist phloem-feeding herbivore. Required for the biosynthesis of antifungal indole glucosinolate metabolites. Required for the pathogen-induced accumulation of 4MO-I3M, which in turn is activated by the atypical BGLU26/PEN2 myrosinase. Required for the biosynthesis of Trp-derived antifungal compounds and non-host resistance to the necrotrophic fungal pathogen Plectosphaerella cucumerina. Required for resistance to the non-adapted fungal pathogen Colletotrichum gloeosporioides. This is Cytochrome P450 81F2 from Arabidopsis thaliana (Mouse-ear cress).